Consider the following 189-residue polypeptide: MIDWSLNPRVNYAANMMRQGGVIAYPTEAVWGLGCNPFDEDAVADLLALKQRPVEKGVILIAANLQQIEPFIDHLDDLQRQRLKNTWPGPVTWLVPNNGLAPHWITGAFPSVALRVTDHPVAAGLCRAFGGPVVSTSCNPAGKPPARNIHEVRRYFGGQLDAVSSGLAGRRTNPSEIRDLLTGQVVRPS.

In terms of domain architecture, YrdC-like spans 7-189 (NPRVNYAANM…LLTGQVVRPS (183 aa)).

This sequence belongs to the SUA5 family. TsaC subfamily.

It localises to the cytoplasm. It carries out the reaction L-threonine + hydrogencarbonate + ATP = L-threonylcarbamoyladenylate + diphosphate + H2O. Required for the formation of a threonylcarbamoyl group on adenosine at position 37 (t(6)A37) in tRNAs that read codons beginning with adenine. Catalyzes the conversion of L-threonine, HCO(3)(-)/CO(2) and ATP to give threonylcarbamoyl-AMP (TC-AMP) as the acyladenylate intermediate, with the release of diphosphate. The sequence is that of Threonylcarbamoyl-AMP synthase from Cellvibrio japonicus (strain Ueda107) (Pseudomonas fluorescens subsp. cellulosa).